A 148-amino-acid polypeptide reads, in one-letter code: IQ domain-containing protein F5 (148 aa).

2 IQ domains span residues 11 to 40 and 67 to 96; these read ERSA…RAWI and QEWA…AVRI.

This is IQ domain-containing protein F5 (IQCF5) from Homo sapiens (Human).